We begin with the raw amino-acid sequence, 105 residues long: Flagellar transcriptional regulator FlhD (105 aa).

The protein belongs to the FlhD family. Homodimer; disulfide-linked. Forms a heterohexamer composed of two FlhC and four FlhD subunits. Each FlhC binds a FlhD dimer, forming a heterotrimer, and a hexamer assembles by dimerization of two heterotrimers.

It is found in the cytoplasm. In terms of biological role, functions in complex with FlhC as a master transcriptional regulator that regulates transcription of several flagellar and non-flagellar operons by binding to their promoter region. Activates expression of class 2 flagellar genes, including fliA, which is a flagellum-specific sigma factor that turns on the class 3 genes. Also regulates genes whose products function in a variety of physiological pathways. This chain is Flagellar transcriptional regulator FlhD, found in Cupriavidus pinatubonensis (strain JMP 134 / LMG 1197) (Cupriavidus necator (strain JMP 134)).